Reading from the N-terminus, the 92-residue chain is MKMILDLDTGIDDAFALAYAIAHPGIDLIGVTGTYGNVTIEQGMANTQALLTLLGAADVPVYAGRAIDGFEVSEASARIHGRNGVGEVDIAA.

The protein belongs to the IUNH family.

This is an uncharacterized protein from Corynebacterium ammoniagenes (Brevibacterium ammoniagenes).